A 549-amino-acid polypeptide reads, in one-letter code: Glucose-6-phosphate isomerase (549 aa).

The active-site Proton donor is the Glu355. Active-site residues include His386 and Lys514.

The protein belongs to the GPI family.

The protein resides in the cytoplasm. The enzyme catalyses alpha-D-glucose 6-phosphate = beta-D-fructose 6-phosphate. Its pathway is carbohydrate biosynthesis; gluconeogenesis. The protein operates within carbohydrate degradation; glycolysis; D-glyceraldehyde 3-phosphate and glycerone phosphate from D-glucose: step 2/4. In terms of biological role, catalyzes the reversible isomerization of glucose-6-phosphate to fructose-6-phosphate. The sequence is that of Glucose-6-phosphate isomerase from Salmonella paratyphi C (strain RKS4594).